A 383-amino-acid chain; its full sequence is Delta(12)-fatty-acid desaturase (383 aa).

The interval 1-24 (MGAGGRMPVPTSSKKSETDTTKRV) is disordered. Basic and acidic residues predominate over residues 14-24 (KKSETDTTKRV). A helical membrane pass occupies residues 56-76 (LISDIIIASCFYYVATNYFSL). Residues 105 to 109 (HECGH) carry the Histidine box-1 motif. The helical transmembrane segment at 117–137 (WLDDTVGLIFHSFLLVPYFSW) threads the bilayer. The Histidine box-2 motif lies at 141 to 145 (HRRHH). 3 consecutive transmembrane segments (helical) span residues 179-199 (IMML…FNVS), 225-245 (IYLS…YAAA), and 252-272 (ICLY…ITYL). A Histidine box-3 motif is present at residues 315-319 (HVAHH).

This sequence belongs to the fatty acid desaturase type 1 family. As to quaternary structure, homo- and heterodimer. Interacts with FAD3 but not with FAD6. FAD2-FAD3 heterodimers can form a metabolic channel in which 18:1-PC is converted to 18:3-PC without releasing a free 18:2-PC intermediate. In terms of tissue distribution, expressed in shoots and roots. Expressed in leaves, stems, flowers and siliques.

Its subcellular location is the endoplasmic reticulum membrane. It is found in the microsome membrane. The enzyme catalyses (9Z)-octadecenoyl-CoA + 2 Fe(II)-[cytochrome b5] + O2 + 2 H(+) = (9Z,12Z)-octadecadienoyl-CoA + 2 Fe(III)-[cytochrome b5] + 2 H2O. It carries out the reaction (9Z)-hexadecenoyl-CoA + 2 Fe(II)-[cytochrome b5] + O2 + 2 H(+) = (9Z,12Z)-hexadecadienoyl-CoA + 2 Fe(III)-[cytochrome b5] + 2 H2O. The catalysed reaction is a (9Z)-octadecenoyl-containing glycerolipid + 2 Fe(II)-[cytochrome b5] + O2 + 2 H(+) = a (9Z,12Z)-octadecadienoyl-containing glycerolipid + 2 Fe(III)-[cytochrome b5] + 2 H2O. It catalyses the reaction (9Z)-octadecenoyl-CoA + AH2 + O2 = (9Z,12Z)-octadecadienoyl-CoA + A + 2 H2O. The enzyme catalyses (9Z)-hexadecenoyl-CoA + AH2 + O2 = (9Z,12Z)-hexadecadienoyl-CoA + A + 2 H2O. It carries out the reaction (9Z)-tetradecenoyl-CoA + 2 Fe(II)-[cytochrome b5] + O2 + 2 H(+) = (9Z,12Z)-tetradecadienoyl-CoA + 2 Fe(III)-[cytochrome b5] + 2 H2O. The catalysed reaction is (9Z)-pentadecenoyl-CoA + 2 Fe(II)-[cytochrome b5] + O2 + 2 H(+) = (9Z,12Z)-pentadecadienoyl-CoA + 2 Fe(III)-[cytochrome b5] + 2 H2O. It catalyses the reaction (9Z)-heptadecenoyl-CoA + 2 Fe(II)-[cytochrome b5] + O2 + 2 H(+) = (9Z,12Z)-heptadecadienoyl-CoA + 2 Fe(III)-[cytochrome b5] + 2 H2O. Its pathway is lipid metabolism; polyunsaturated fatty acid biosynthesis. ER (microsomal) omega-6 fatty acid desaturase introduces the second double bond in the biosynthesis of 18:3 fatty acids, important constituents of plant membranes. Delta(12)-desaturase with regioselectivity determined by the double bond (delta(9) position) and carboxyl group of the substrate. Can use both 16:1 and 18:1 fatty acids as substrates. It is thought to use cytochrome b5 as an electron donor and to act on fatty acids esterified to phosphatidylcholine (PC) and, possibly, other phospholipids. Very low constitutive hydroxylation activity. Required for desaturation of fatty acids present in extraplastidial membranes, including mitochondria. Required for salt tolerance during seed germination and early seedling growth. The chain is Delta(12)-fatty-acid desaturase from Arabidopsis thaliana (Mouse-ear cress).